The primary structure comprises 119 residues: Large ribosomal subunit protein bL20 (119 aa).

It belongs to the bacterial ribosomal protein bL20 family.

Binds directly to 23S ribosomal RNA and is necessary for the in vitro assembly process of the 50S ribosomal subunit. It is not involved in the protein synthesizing functions of that subunit. This chain is Large ribosomal subunit protein bL20, found in Deinococcus geothermalis (strain DSM 11300 / CIP 105573 / AG-3a).